Consider the following 494-residue polypeptide: Alanine--glyoxylate aminotransferase 2-like (494 aa).

Lysine 291 bears the N6-(pyridoxal phosphate)lysine mark.

Belongs to the class-III pyridoxal-phosphate-dependent aminotransferase family. Requires pyridoxal 5'-phosphate as cofactor.

The polypeptide is Alanine--glyoxylate aminotransferase 2-like (Drosophila melanogaster (Fruit fly)).